Consider the following 484-residue polypeptide: tRNA sulfurtransferase (484 aa).

Residues 63 to 167 form the THUMP domain; the sequence is QGIRERLSCM…DQRLFVVHDQ (105 aa). ATP is bound by residues 185-186, K267, G289, and Q298; that span reads LM. An intrachain disulfide couples C346 to C457. A Rhodanese domain is found at 405–483; it reads ALAGQVILDI…GHANVRVYRP (79 aa). Catalysis depends on C457, which acts as the Cysteine persulfide intermediate.

The protein belongs to the ThiI family.

It localises to the cytoplasm. The catalysed reaction is [ThiI sulfur-carrier protein]-S-sulfanyl-L-cysteine + a uridine in tRNA + 2 reduced [2Fe-2S]-[ferredoxin] + ATP + H(+) = [ThiI sulfur-carrier protein]-L-cysteine + a 4-thiouridine in tRNA + 2 oxidized [2Fe-2S]-[ferredoxin] + AMP + diphosphate. The enzyme catalyses [ThiS sulfur-carrier protein]-C-terminal Gly-Gly-AMP + S-sulfanyl-L-cysteinyl-[cysteine desulfurase] + AH2 = [ThiS sulfur-carrier protein]-C-terminal-Gly-aminoethanethioate + L-cysteinyl-[cysteine desulfurase] + A + AMP + 2 H(+). Its pathway is cofactor biosynthesis; thiamine diphosphate biosynthesis. Its function is as follows. Catalyzes the ATP-dependent transfer of a sulfur to tRNA to produce 4-thiouridine in position 8 of tRNAs, which functions as a near-UV photosensor. Also catalyzes the transfer of sulfur to the sulfur carrier protein ThiS, forming ThiS-thiocarboxylate. This is a step in the synthesis of thiazole, in the thiamine biosynthesis pathway. The sulfur is donated as persulfide by IscS. The chain is tRNA sulfurtransferase from Pseudomonas syringae pv. syringae (strain B728a).